The primary structure comprises 222 residues: MKLPLLLALLFGAVSALHLRSETSTFETPLGAKTLPEDEETPEQEMEETPCRELEEEEEWGSGSEDASKKDGAVESISVPDMVDKNLTCPEEEDTVKVVGIPGCQTCRYLLVRSLQTFSQAWFTCRRCYRGNLVSIHNFNINYRIQCSVSALNQGQVWIGGRITGSGRCRRFQWVDGSRWNFAYWAAHQPWSRGGHCVALCTRGGHWRRAHCLRRLPFICSY.

Positions M1–A16 are cleaved as a signal peptide. The propeptide at L17–Q105 is acidic. O-linked (GalNAc...) threonine; partial glycosylation occurs at T23. O-linked (GalNAc...) serine glycosylation is present at S24. O-linked (GalNAc...) threonine glycosylation is present at T25. Residues T25–E75 form a disordered region. O-linked (GalNAc...) threonine; partial glycosylation occurs at T34. Positions E37–W60 are enriched in acidic residues. S62 carries O-linked (Xyl...) (chondroitin sulfate) serine glycosylation. An N-linked (GlcNAc...) asparagine glycan is attached at N86. The 119-residue stretch at C104 to Y222 folds into the C-type lectin domain. 2 disulfide bridges follow: C125-C220 and C197-C212.

As to quaternary structure, in pregnancy serum, the proform exists as a disulfide-linked 2:2 heterotetramer with PAPPA, as a disulfide-linked 2:2 heterotetramer with AGT, and as a complex (probably a 2:2:2 heterohexamer) with AGT and C3dg. Nitrated. In terms of tissue distribution, detected in plasma and urine (at protein level). Detected in placenta (at protein level). High levels of the proform in placenta and pregnancy serum; in placenta, localized to X cells of septa and anchoring villi. Lower levels in a variety of other tissues including kidney, myometrium, endometrium, ovaries, breast, prostate, bone marrow and colon.

The protein localises to the secreted. Its subcellular location is the cytoplasmic vesicle. The protein resides in the secretory vesicle. Functionally, cytotoxin and helminthotoxin. Also induces non-cytolytic histamine release from human basophils. Involved in antiparasitic defense mechanisms and immune hypersensitivity reactions. The proform acts as a proteinase inhibitor, reducing the activity of PAPPA. The protein is Bone marrow proteoglycan (PRG2) of Homo sapiens (Human).